Reading from the N-terminus, the 352-residue chain is MLGDTEVLANLRVLQTELTGAGILEPLLSADGTTDVLVTAPDSVWVDDGNGLRRSQIRFADESAVRRLAQRLALAAGRRLDDAQPWVDGQLTGIGVGGFAVRLHAVLPPVATQGTCLSLRVLRPATQDLAALAAAGAIDPAAAALVADIVTARLAFLVCGGTGAGKTTLLAAMLGAVSPDERIVCVEDAAELAPRHPHLVKLVARRANVEGIGEVTVRQLVRQALRMRPDRIVVGEVRGAEVVDLLAALNTGHEGGAGTVHANNPGEVPARMEALGALGGLDRAALHSQLAAAVQVLLHVARDRAGRRRLAEIAVLRQAEGRVQAVTVWHADRGMSDDAAALHDLLRSRASA.

An ATP-binding site is contributed by G160 to T167.

It belongs to the GSP E family.

It is found in the cytoplasm. In Mycobacterium tuberculosis (strain CDC 1551 / Oshkosh), this protein is Putative conjugal transfer protein MT3759.